The following is a 222-amino-acid chain: UPF0758 protein YicR (222 aa).

One can recognise an MPN domain in the interval 100–222; sequence PLLSPEMTRE…NVSFAERGWI (123 aa). Zn(2+) contacts are provided by His-171, His-173, and Asp-184. The JAMM motif motif lies at 171–184; sequence HNHPSGCAEPSKAD.

The protein belongs to the UPF0758 family. YicR subfamily.

This chain is UPF0758 protein YicR, found in Shigella boydii serotype 18 (strain CDC 3083-94 / BS512).